We begin with the raw amino-acid sequence, 498 residues long: Probable cytosol aminopeptidase (498 aa).

Residues lysine 262 and aspartate 267 each contribute to the Mn(2+) site. Lysine 274 is a catalytic residue. Residues aspartate 285, aspartate 344, and glutamate 346 each contribute to the Mn(2+) site. Residue arginine 348 is part of the active site.

The protein belongs to the peptidase M17 family. The cofactor is Mn(2+).

The protein resides in the cytoplasm. The enzyme catalyses Release of an N-terminal amino acid, Xaa-|-Yaa-, in which Xaa is preferably Leu, but may be other amino acids including Pro although not Arg or Lys, and Yaa may be Pro. Amino acid amides and methyl esters are also readily hydrolyzed, but rates on arylamides are exceedingly low.. The catalysed reaction is Release of an N-terminal amino acid, preferentially leucine, but not glutamic or aspartic acids.. Its function is as follows. Presumably involved in the processing and regular turnover of intracellular proteins. Catalyzes the removal of unsubstituted N-terminal amino acids from various peptides. In Phytoplasma mali (strain AT), this protein is Probable cytosol aminopeptidase.